Reading from the N-terminus, the 93-residue chain is PqqA binding protein (93 aa).

This sequence belongs to the PqqD family. In terms of assembly, monomer. Interacts with PqqE.

The protein operates within cofactor biosynthesis; pyrroloquinoline quinone biosynthesis. In terms of biological role, functions as a PqqA binding protein and presents PqqA to PqqE, in the pyrroloquinoline quinone (PQQ) biosynthetic pathway. The polypeptide is PqqA binding protein (Methylococcus capsulatus (strain ATCC 33009 / NCIMB 11132 / Bath)).